Reading from the N-terminus, the 295-residue chain is Nucleotide-binding protein MCA0739 (295 aa).

Residue 8–15 (GFSGSGKS) participates in ATP binding. 60–63 (DARN) is a binding site for GTP.

The protein belongs to the RapZ-like family.

Its function is as follows. Displays ATPase and GTPase activities. The polypeptide is Nucleotide-binding protein MCA0739 (Methylococcus capsulatus (strain ATCC 33009 / NCIMB 11132 / Bath)).